The following is a 360-amino-acid chain: Phenylalanine--tRNA ligase alpha subunit (360 aa).

Glu-260 provides a ligand contact to Mg(2+).

The protein belongs to the class-II aminoacyl-tRNA synthetase family. Phe-tRNA synthetase alpha subunit type 1 subfamily. Tetramer of two alpha and two beta subunits. Mg(2+) serves as cofactor.

It localises to the cytoplasm. It catalyses the reaction tRNA(Phe) + L-phenylalanine + ATP = L-phenylalanyl-tRNA(Phe) + AMP + diphosphate + H(+). This chain is Phenylalanine--tRNA ligase alpha subunit, found in Sinorhizobium medicae (strain WSM419) (Ensifer medicae).